We begin with the raw amino-acid sequence, 284 residues long: Pollen allergen Phl p 5b (284 aa).

A signal peptide spans 1 to 19 (AAAAVPRRGPRGGPGRSYT). A disordered region spans residues 1–21 (AAAAVPRRGPRGGPGRSYTAD).

It belongs to the Poa p IX/Phl p VI allergen family. In terms of assembly, homodimer; disulfide-linked.

Functionally, has ribonuclease activity. May be involved in host-pathogen interactions. This is Pollen allergen Phl p 5b from Phleum pratense (Common timothy).